The sequence spans 259 residues: NADPH-dependent reductase BacG (259 aa).

NADP(+) contacts are provided by residues 12–15 (SQGI), 34–36 (SRN), 62–63 (DM), I90, K113, and 185–191 (GFIATDR).

Belongs to the short-chain dehydrogenases/reductases (SDR) family. Homodimer.

The protein localises to the cytoplasm. It functions in the pathway antibiotic biosynthesis; bacilysin biosynthesis. Along with the bacABCDEF operon, BacG is involved in the biosynthesis of the nonribosomally synthesized dipeptide antibiotic bacilysin, composed of L-alanine and L-anticapsin. Bacilysin is an irreversible inactivator of the glutaminase domain of glucosamine synthetase. BacG catalyzes the stereoselective reduction of exocyclic-delta(3),delta(5)-dihydro-hydroxyphenylpyruvate (ex-H2HPP), adding a pro-S hydride equivalent to C4 position to yield tetrahydro-hydroxyphenylpyruvate (H4HPP). Although the 3Z,7R-ex-H2HPP isomer is kinetically disfavored by BacB and produced in a smaller quantity than 3E,7R-ex-H2HPP, it is the preferred substrate for the conjugate reduction reaction of BacG. The polypeptide is NADPH-dependent reductase BacG (Bacillus subtilis (strain 168)).